We begin with the raw amino-acid sequence, 166 residues long: NAD(P)H-quinone oxidoreductase subunit I, chloroplastic (166 aa).

4Fe-4S ferredoxin-type domains are found at residues 55–84 (GRIH…VDWK) and 95–124 (LNYS…MTEE). [4Fe-4S] cluster is bound by residues C64, C67, C70, C74, C104, C107, C110, and C114.

Belongs to the complex I 23 kDa subunit family. In terms of assembly, NDH is composed of at least 16 different subunits, 5 of which are encoded in the nucleus. [4Fe-4S] cluster serves as cofactor.

The protein localises to the plastid. The protein resides in the chloroplast thylakoid membrane. The catalysed reaction is a plastoquinone + NADH + (n+1) H(+)(in) = a plastoquinol + NAD(+) + n H(+)(out). It catalyses the reaction a plastoquinone + NADPH + (n+1) H(+)(in) = a plastoquinol + NADP(+) + n H(+)(out). Its function is as follows. NDH shuttles electrons from NAD(P)H:plastoquinone, via FMN and iron-sulfur (Fe-S) centers, to quinones in the photosynthetic chain and possibly in a chloroplast respiratory chain. The immediate electron acceptor for the enzyme in this species is believed to be plastoquinone. Couples the redox reaction to proton translocation, and thus conserves the redox energy in a proton gradient. This is NAD(P)H-quinone oxidoreductase subunit I, chloroplastic from Bahiopsis tomentosa (Tecote).